Consider the following 141-residue polypeptide: Hemoglobin subunit alpha (141 aa).

A Globin domain is found at 1 to 141; that stretch reads VLSPADKNNV…VSTVLTSKYR (141 aa). At Ser3 the chain carries Phosphoserine. N6-succinyllysine occurs at positions 7 and 11. At Lys16 the chain carries N6-acetyllysine; alternate. An N6-succinyllysine; alternate modification is found at Lys16. The residue at position 24 (Tyr24) is a Phosphotyrosine. The residue at position 35 (Ser35) is a Phosphoserine. Lys40 bears the N6-succinyllysine mark. Position 49 is a phosphoserine (Ser49). His58 is an O2 binding site. A heme b-binding site is contributed by His87. A Phosphoserine modification is found at Ser102. Position 108 is a phosphothreonine (Thr108). Ser124 and Ser131 each carry phosphoserine. Phosphothreonine occurs at positions 134 and 137. Residue Ser138 is modified to Phosphoserine.

This sequence belongs to the globin family. As to quaternary structure, heterotetramer of two alpha chains and two beta chains. In terms of tissue distribution, red blood cells.

Involved in oxygen transport from the lung to the various peripheral tissues. Functionally, hemopressin acts as an antagonist peptide of the cannabinoid receptor CNR1. Hemopressin-binding efficiently blocks cannabinoid receptor CNR1 and subsequent signaling. This chain is Hemoglobin subunit alpha (HBA), found in Urocitellus townsendii (Townsend's ground squirrel).